A 600-amino-acid polypeptide reads, in one-letter code: Chaperone protein DnaK (600 aa).

T175 is modified (phosphothreonine; by autocatalysis). Residues 569–578 (SFAQATAQQA) show a composition bias toward low complexity. The disordered stretch occupies residues 569 to 600 (SFAQATAQQANTSESDPKADDSNTIDAEIKQD). Residues 583–600 (SDPKADDSNTIDAEIKQD) show a composition bias toward basic and acidic residues.

It belongs to the heat shock protein 70 family.

Its function is as follows. Acts as a chaperone. This chain is Chaperone protein DnaK, found in Mesomycoplasma hyopneumoniae (strain J / ATCC 25934 / NCTC 10110) (Mycoplasma hyopneumoniae).